Consider the following 329-residue polypeptide: Protein-arginine N-acetylglucosaminyltransferase NleB1 (329 aa).

Residue arginine 13 is glycosylated (N-beta-linked (GlcNAc) arginine; by autocatalysis). A UDP-N-acetyl-alpha-D-glucosamine-binding site is contributed by 48–50 (QWF). Residue arginine 53 is glycosylated (N-beta-linked (GlcNAc) arginine; by autocatalysis). Tyrosine 72 serves as a coordination point for UDP-N-acetyl-alpha-D-glucosamine. A glycan (N-beta-linked (GlcNAc) arginine; by autocatalysis) is linked at arginine 159. 219-222 (YLDA) provides a ligand contact to UDP-N-acetyl-alpha-D-glucosamine. The DXD motif motif lies at 221–223 (DAD). Aspartate 223 contributes to the Mn(2+) binding site. The active-site Proton acceptor is the glutamate 253. N-beta-linked (GlcNAc) arginine; by autocatalysis glycosylation is present at arginine 293. Positions 320 and 322 each coordinate Mn(2+). UDP-N-acetyl-alpha-D-glucosamine-binding positions include serine 322 and 327–329 (SSW).

This sequence belongs to the glycosyltransferase NleB family. Mn(2+) serves as cofactor. Post-translationally, auto-glycosylated: arginine GlcNAcylation is required for activity toward death domain-containing host target proteins.

The protein localises to the secreted. The protein resides in the host cytoplasm. The enzyme catalyses L-arginyl-[protein] + UDP-N-acetyl-alpha-D-glucosamine = N(omega)-(N-acetyl-beta-D-glucosaminyl)-L-arginyl-[protein] + UDP + H(+). With respect to regulation, protein-arginine N-acetylglucosaminyltransferase activity is inhibited by 100066N compound (flavone analog) and 102644N compound (a substituted isoxazole). Its function is as follows. Protein-arginine N-acetylglucosaminyltransferase effector that disrupts TNF signaling in infected cells, including NF-kappa-B signaling, apoptosis and necroptosis. Acts by catalyzing the transfer of a single N-acetylglucosamine (GlcNAc) to a conserved arginine residue in the death domain of host proteins such as FADD: arginine GlcNAcylation prevents homotypic/heterotypic death domain interactions and assembly of the oligomeric TNF-alpha receptor complex, thereby disrupting TNF signaling. Also acts on host proteins without a death domain: catalyzes arginine GlcNAcylation of host GAPDH protein, thereby preventing GAPDH interaction with TRAF2, leading to inhibit NF-kappa-B signaling. Catalyzes auto-GlcNAcylation, which is required for activity toward death domain-containing host target proteins. The polypeptide is Protein-arginine N-acetylglucosaminyltransferase NleB1 (Escherichia coli O157:H7).